The following is a 66-amino-acid chain: M-poneratoxin-Dq3a (66 aa).

A signal peptide spans 1–23 (MKLSALSIIFGMILVMTIMYTKA). Residues 24-43 (EAEAEAEADADADAKAEAEA) constitute a propeptide that is removed on maturation.

Belongs to the non-disulfide-bridged peptide (NDBP) superfamily. Medium-length antimicrobial peptide (group 3) family. Ponericin-W subfamily. Expressed by the venom gland.

It is found in the secreted. Its subcellular location is the target cell membrane. In terms of biological role, may have antimicrobial properties by disrupting the integrity of the bacterial cell membrane. In addition, when tested in vitro on the parasite Trypanosoma cruzi (responsible of the Chagas disease), is able to potently reduce the number of the three forms (epimastigote, trypomastigote and amastigote) by inducing cell death through necrosis. Functionally, may have antimicrobial properties by disrupting the integrity of the bacterial cell membrane. In addition, when tested in vitro on the parasite Trypanosoma cruzi (responsible of the Chagas disease), is able to moderately reduce the number of the forms epimastigote and trypomastigote. Its activity on the amastigote form has not been tested. Its function is as follows. May have antimicrobial properties by disrupting the integrity of the bacterial cell membrane. In addition, when tested in vitro on the parasite Trypanosoma cruzi (responsible of the Chagas disease), shows only a weak reduction of the number of the trypomastigote forms. Has no activity on the epimastigote forms. Its activity on the amastigote form has not been tested. This Dinoponera quadriceps (South American ant) protein is M-poneratoxin-Dq3a.